Consider the following 431-residue polypeptide: Putative serine/threonine-protein kinase A (431 aa).

The Protein kinase domain occupies 20 to 279 (YLNKGIVGLG…VREIFQIPYI (260 aa)). ATP-binding positions include 26–34 (VGLGSYGEA) and lysine 49. The active-site Proton acceptor is the aspartate 147. Positions 331–429 (DVTHRGHVNK…WVHAIQRGIG (99 aa)) constitute a PH domain.

This sequence belongs to the protein kinase superfamily. Ser/Thr protein kinase family.

It carries out the reaction L-seryl-[protein] + ATP = O-phospho-L-seryl-[protein] + ADP + H(+). It catalyses the reaction L-threonyl-[protein] + ATP = O-phospho-L-threonyl-[protein] + ADP + H(+). The polypeptide is Putative serine/threonine-protein kinase A (NRKA) (Trypanosoma brucei brucei).